The primary structure comprises 347 residues: Ileal sodium/bile acid cotransporter (347 aa).

Topologically, residues 1–29 (MSNLTVGCLANATVCEGASCVAPESNFNA) are extracellular. N3 and N11 each carry an N-linked (GlcNAc...) asparagine glycan. The chain crosses the membrane as a helical span at residues 30–50 (ILSVVLSTVLTILLALVMFSM). Residues 51-83 (GCNVEIKKFLGHIRRPWGIFIGFLCQFGIMPLT) lie on the Cytoplasmic side of the membrane. The chain crosses the membrane as a helical span at residues 84–104 (GFVLAVAFGIMPIQAVVVLIM). Over 105 to 127 (GCCPGGTASNILAYWVDGDMDLS) the chain is Extracellular. A helical transmembrane segment spans residues 128–148 (VSMTTCSTLLALGMMPLCLYV). The Cytoplasmic portion of the chain corresponds to 149-158 (YTKMWVDSGT). The chain crosses the membrane as a helical span at residues 159-179 (IVIPYDNIGTSLVALVVPVSI). Residues 180–196 (GMFVNHKWPQKAKIILK) lie on the Extracellular side of the membrane. A helical membrane pass occupies residues 197 to 217 (VGSIAGAVLIVLIAVVGGILY). Over 218 to 225 (QSAWIIEP) the chain is Cytoplasmic. The chain crosses the membrane as a helical span at residues 226–246 (KLWIIGTIFPMAGYSLGFFLA). Over 247 to 289 (RIAGQPWYRCRTVALETGMQNTQLCSTIVQLSFSPEDLTYVFT) the chain is Extracellular. Residues 290–310 (FPLIYSIFQIAFAAIFLGIYV) traverse the membrane as a helical segment. At 311-347 (AYRKCHGKNDAEFPDIKDTKTEPESSFHQMNGGFQPE) the chain is on the cytoplasmic side. A compositionally biased stretch (basic and acidic residues) spans 323 to 335 (FPDIKDTKTEPES). The disordered stretch occupies residues 323–347 (FPDIKDTKTEPESSFHQMNGGFQPE). Phosphoserine is present on S336.

The protein belongs to the bile acid:sodium symporter (BASS) (TC 2.A.28) family. As to quaternary structure, monomer and homodimer.

It localises to the membrane. It carries out the reaction taurocholate(out) + 2 Na(+)(out) = taurocholate(in) + 2 Na(+)(in). The enzyme catalyses cholate(out) + 2 Na(+)(out) = cholate(in) + 2 Na(+)(in). It catalyses the reaction taurochenodeoxycholate(out) + 2 Na(+)(out) = taurochenodeoxycholate(in) + 2 Na(+)(in). The catalysed reaction is tauroursodeoxycholate(out) + 2 Na(+)(out) = tauroursodeoxycholate(in) + 2 Na(+)(in). It carries out the reaction glycocholate(out) + 2 Na(+)(out) = glycocholate(in) + 2 Na(+)(in). The enzyme catalyses tauronorcholate(out) + 2 Na(+)(out) = tauronorcholate(in) + 2 Na(+)(in). It catalyses the reaction tauroallocholate(out) + 2 Na(+)(out) = tauroallocholate(in) + 2 Na(+)(in). The catalysed reaction is taurodeoxycholate(out) + 2 Na(+)(out) = taurodeoxycholate(in) + 2 Na(+)(in). It carries out the reaction tauro-beta-muricholate(out) + 2 Na(+)(out) = tauro-beta-muricholate(in) + 2 Na(+)(in). Plays a critical role in the sodium-dependent reabsorption of bile acids from the lumen of the small intestine. Transports various bile acids, unconjugated or conjugated, such as cholate and taurocholate. Also responsible for bile acid transport in the renal proximal tubules, a salvage mechanism that helps conserve bile acids. Works collaboratively with the Na(+)-taurocholate cotransporting polypeptide (NTCP), the organic solute transporter (OST), and the bile salt export pump (BSEP), to ensure efficacious biological recycling of bile acids during enterohepatic circulation. The polypeptide is Ileal sodium/bile acid cotransporter (SLC10A2) (Oryctolagus cuniculus (Rabbit)).